Consider the following 429-residue polypeptide: Serine--tRNA ligase (429 aa).

T228–E230 provides a ligand contact to L-serine. R259–E261 is a binding site for ATP. E282 is a binding site for L-serine. E346–S349 lines the ATP pocket. S384 contributes to the L-serine binding site.

The protein belongs to the class-II aminoacyl-tRNA synthetase family. Type-1 seryl-tRNA synthetase subfamily. In terms of assembly, homodimer. The tRNA molecule binds across the dimer.

It is found in the cytoplasm. The catalysed reaction is tRNA(Ser) + L-serine + ATP = L-seryl-tRNA(Ser) + AMP + diphosphate + H(+). It carries out the reaction tRNA(Sec) + L-serine + ATP = L-seryl-tRNA(Sec) + AMP + diphosphate + H(+). It functions in the pathway aminoacyl-tRNA biosynthesis; selenocysteinyl-tRNA(Sec) biosynthesis; L-seryl-tRNA(Sec) from L-serine and tRNA(Sec): step 1/1. Catalyzes the attachment of serine to tRNA(Ser). Is also able to aminoacylate tRNA(Sec) with serine, to form the misacylated tRNA L-seryl-tRNA(Sec), which will be further converted into selenocysteinyl-tRNA(Sec). This is Serine--tRNA ligase from Anaplasma marginale (strain St. Maries).